The sequence spans 1382 residues: Suppressor of organelle fusion 2 (1382 aa).

In terms of domain architecture, BEACH spans 229 to 463 (RIPLDEATSN…QLFNRPHPIR (235 aa)). 2 WD repeats span residues 1094–1133 (GHQEKIRKLAAISNENSFVSASSDKTVKLWSIKPELDEIG) and 1140–1176 (KHTRPVHDITILADNSIASTDGVLHVWDPFRTTLLAQ).

This sequence belongs to the WD repeat WDR81 family. In terms of assembly, interacts with sorf-1; the interaction is direct. Interacts with bec-1.

The protein localises to the early endosome. It is found in the late endosome. Its subcellular location is the cytoplasm. Together with sorf-1 negatively regulates the levels of phosphatidylinositol 3-phosphate (PtdIns3P) to enable the conversion of early endosomes to late endosomes. Binds to sorf-1 and the sorf-1-sorf-2 complex likely acts through bec-1, a non-catalytic subunit of phosphatidylinositol 3-kinase (PI3K), to suppress PI3K activity, thereby negatively regulating endosomal PtdIns3P levels. The chain is Suppressor of organelle fusion 2 from Caenorhabditis elegans.